The chain runs to 137 residues: uncharacterized protein (137 aa).

Belongs to the ycf72 family.

The protein resides in the plastid. It localises to the chloroplast. This is an uncharacterized protein from Zea mays (Maize).